A 603-amino-acid polypeptide reads, in one-letter code: Prostaglandin G/H synthase 1 (603 aa).

A signal peptide spans 1 to 27; sequence MSRGSRLHRWPLLLLLLLLLPPPPVLP. The EGF-like domain occupies 35-73; it reads PVNPCCYYPCQHQGICVRFGLDRYQCDCTRTGYSGPNCT. 4 cysteine pairs are disulfide-bonded: cysteine 39–cysteine 50, cysteine 40–cysteine 162, cysteine 44–cysteine 60, and cysteine 62–cysteine 72. 3 N-linked (GlcNAc...) asparagine glycosylation sites follow: asparagine 71, asparagine 107, and asparagine 147. Histidine 210 (proton acceptor) is an active-site residue. Tyrosine 388 (for cyclooxygenase activity) is an active-site residue. Residue histidine 391 participates in heme b binding. The cysteines at positions 572 and 578 are disulfide-linked.

Belongs to the prostaglandin G/H synthase family. As to quaternary structure, homodimer. Heme b is required as a cofactor. In terms of processing, N-glycosylated. N-linked glycosylation is necessary for enzymatic activity. Brain cortex. Isoform 2 is expressed in the cerebral cortex and heart.

It is found in the microsome membrane. It localises to the endoplasmic reticulum membrane. The catalysed reaction is (5Z,8Z,11Z,14Z)-eicosatetraenoate + AH2 + 2 O2 = prostaglandin H2 + A + H2O. It carries out the reaction (5Z,8Z,11Z,14Z)-eicosatetraenoate + 2 O2 = prostaglandin G2. The enzyme catalyses prostaglandin G2 + AH2 = prostaglandin H2 + A + H2O. It catalyses the reaction (9Z,12Z)-octadecadienoate + AH2 + O2 = (9R)-hydroxy-(10E,12Z)-octadecadienoate + A + H2O. The catalysed reaction is (9Z,12Z)-octadecadienoate + AH2 + O2 = (9S)-hydroxy-(10E,12Z)-octadecadienoate + A + H2O. It carries out the reaction (9Z,12Z)-octadecadienoate + AH2 + O2 = (13S)-hydroxy-(9Z,11E)-octadecadienoate + A + H2O. The enzyme catalyses (9Z,12Z)-octadecadienoate + AH2 + O2 = (13R)-hydroxy-(9Z,11E)-octadecadienoate + A + H2O. The protein operates within lipid metabolism; prostaglandin biosynthesis. The cyclooxygenase activity is inhibited by nonsteroidal anti-inflammatory drugs (NSAIDs) including ibuprofen, flurbiprofen, ketoprofen, naproxen, flurbiprofen, anirolac, fenclofenac and diclofenac. Its function is as follows. Dual cyclooxygenase and peroxidase that plays an important role in the biosynthesis pathway of prostanoids, a class of C20 oxylipins mainly derived from arachidonate ((5Z,8Z,11Z,14Z)-eicosatetraenoate, AA, C20:4(n-6)), with a particular role in the inflammatory response. The cyclooxygenase activity oxygenates AA to the hydroperoxy endoperoxide prostaglandin G2 (PGG2), and the peroxidase activity reduces PGG2 to the hydroxy endoperoxide prostaglandin H2 (PGH2), the precursor of all 2-series prostaglandins and thromboxanes. This complex transformation is initiated by abstraction of hydrogen at carbon 13 (with S-stereochemistry), followed by insertion of molecular O2 to form the endoperoxide bridge between carbon 9 and 11 that defines prostaglandins. The insertion of a second molecule of O2 (bis-oxygenase activity) yields a hydroperoxy group in PGG2 that is then reduced to PGH2 by two electrons. Involved in the constitutive production of prostanoids in particular in the stomach and platelets. In gastric epithelial cells, it is a key step in the generation of prostaglandins, such as prostaglandin E2 (PGE2), which plays an important role in cytoprotection. In platelets, it is involved in the generation of thromboxane A2 (TXA2), which promotes platelet activation and aggregation, vasoconstriction and proliferation of vascular smooth muscle cells. Can also use linoleate (LA, (9Z,12Z)-octadecadienoate, C18:2(n-6)) as substrate and produce hydroxyoctadecadienoates (HODEs) in a regio- and stereospecific manner, being (9R)-HODE ((9R)-hydroxy-(10E,12Z)-octadecadienoate) and (13S)-HODE ((13S)-hydroxy-(9Z,11E)-octadecadienoate) its major products. The sequence is that of Prostaglandin G/H synthase 1 (PTGS1) from Canis lupus familiaris (Dog).